The primary structure comprises 665 residues: Dystrophia myotonica WD repeat-containing protein (665 aa).

The span at 1 to 11 (MAAGGAEGGPG) shows a compositional bias: gly residues. Disordered regions lie at residues 1-91 (MAAG…PALP) and 100-119 (LGDPDGAGEPPSTPSGLGAG). Alanine 2 is modified (N-acetylalanine). Residues 52-64 (PAPPQPTQPPPGP) are compositionally biased toward pro residues. The segment covering 65 to 76 (AAASGPGAAGPA) has biased composition (low complexity). A compositionally biased stretch (pro residues) spans 77–89 (SSPPPAGPGPGPA). 4 WD repeats span residues 208-248 (IDKT…TSTP), 279-318 (VGEGPLNEFAFSPDGRHLACVSQDGCLRVFHFDSMLLRGL), 321-360 (SYFGGLLCVCWSPDGRYVVTGGEDDLVTVWSFTEGRVVAR), and 363-445 (GHKS…LSPH). Disordered regions lie at residues 380–413 (AEEAASASADGDPSGEEEEPEVTSSDTGAPVSPL), 446–506 (PSLA…SMEP), 524–564 (RDRG…RSRL), and 628–665 (DEETEAQAGQASWPRSPSKSVVEGISSQPGSSPSGTVV). Residues 450 to 491 (RTRTLPGTPGATPPASGSSRAGETGAGPLPRSLSRSNSLPHP) are compositionally biased toward low complexity. Serine 487 bears the Phosphoserine mark. Arginine 543 bears the Omega-N-methylarginine mark. The stretch at 592–629 (IAQERLTVLLFLEDCIITACQEGLICTWARPGKAFTDE) is one WD 5 repeat. Residues 634 to 646 (QAGQASWPRSPSK) are compositionally biased toward polar residues. Low complexity predominate over residues 653-665 (SSQPGSSPSGTVV).

In terms of assembly, component of the USP12/DMWD/WDR48 deubiquitinating complex. Interacts with USP12; promotes its enzymatic activity. Interacts with USP46. Widely expressed in brain where it localizes to the olfactory bulb, forebrain, thalamus, hippocampus, cerebellum, cortex and hypothalamus (at protein level). Expression seems to be particularly strong in areas of high synaptic density such as the glomerular layer of the olfactory bulb, and mossy fiber terminal fields of the hippocampus (at protein level). Expressed in retina, with strongest expression in the external and internal plexiform layers (at protein level). Strongly expressed in brain and testis. Also detected at lower levels in heart, kidney, liver, lung, ovary, uterus, bladder and skeletal muscle. In testis, expression seems to be restricted to secondary spermatocytes.

The protein localises to the cytoplasm. The protein resides in the nucleus. It localises to the perikaryon. Its subcellular location is the cell projection. It is found in the dendrite. Its function is as follows. Regulator of the deubiquitinating USP12/DMWD/WDR48 complex. Functions as a cofactor that promotes USP12 enzymatic activity. The polypeptide is Dystrophia myotonica WD repeat-containing protein (Dmwd) (Mus musculus (Mouse)).